The primary structure comprises 453 residues: Serine protease HTRA3 (453 aa).

An N-terminal signal peptide occupies residues 1 to 17 (MQARALLLAALAALALA). The IGFBP N-terminal domain occupies 21–84 (PAAPCPARCD…ECVRGLCRCR (64 aa)). Disulfide bonds link Cys-25-Cys-48, Cys-29-Cys-50, Cys-34-Cys-51, Cys-39-Cys-54, Cys-62-Cys-76, Cys-70-Cys-81, Cys-83-Cys-101, and Cys-90-Cys-126. The region spanning 64–128 (GPLDSPCGES…RQLQKGACPL (65 aa)) is the Kazal-like domain. Positions 175 to 340 (GSGFIMSEAG…AIPSDRITRF (166 aa)) are serine protease. Active-site charge relay system residues include His-191, Asp-227, and Ser-305. Positions 359 to 444 (IRMRTITPSL…EVRRGNDDLL (86 aa)) constitute a PDZ domain.

The protein belongs to the peptidase S1C family. Homotrimer. Interacts with TGFB1; the interaction inhibits TGFB-mediated signaling. Interacts with BMP4; the interaction inhibits BMP4-mediated signaling. Interacts with TGFB2 and GDF5. Interacts with MYH9. In terms of tissue distribution, widely expressed, with highest levels in both adult and fetal heart, ovary, uterus placenta, and bladder. In the endometrium, expressed in epithelial glands and the stroma. Also present in leukocytes. Isoform 1 is predominant in heart and skeletal muscle, whereas isoform 2 is predominant in placenta and kidney.

It localises to the secreted. Its function is as follows. Serine protease that cleaves beta-casein/CSN2 as well as several extracellular matrix (ECM) proteoglycans such as decorin/DCN, biglycan/BGN and fibronectin/FN1. Inhibits signaling mediated by TGF-beta family proteins possibly indirectly by degradation of these ECM proteoglycans. May act as a tumor suppressor. Negatively regulates, in vitro, trophoblast invasion during placental development and may be involved in the development of the placenta in vivo. May also have a role in ovarian development, granulosa cell differentiation and luteinization. The chain is Serine protease HTRA3 (HTRA3) from Homo sapiens (Human).